The sequence spans 345 residues: Beta-ketoacyl-[acyl-carrier-protein] synthase III (345 aa).

Catalysis depends on residues cysteine 114 and histidine 272. Positions 273-277 are ACP-binding; sequence QANQR. Asparagine 302 is a catalytic residue.

Belongs to the thiolase-like superfamily. FabH family. In terms of assembly, homodimer.

It is found in the cytoplasm. The catalysed reaction is malonyl-[ACP] + acetyl-CoA + H(+) = 3-oxobutanoyl-[ACP] + CO2 + CoA. It participates in lipid metabolism; fatty acid biosynthesis. Its function is as follows. Catalyzes the condensation reaction of fatty acid synthesis by the addition to an acyl acceptor of two carbons from malonyl-ACP. Catalyzes the first condensation reaction which initiates fatty acid synthesis and may therefore play a role in governing the total rate of fatty acid production. Possesses both acetoacetyl-ACP synthase and acetyl transacylase activities. Its substrate specificity determines the biosynthesis of branched-chain and/or straight-chain of fatty acids. This Rhodopirellula baltica (strain DSM 10527 / NCIMB 13988 / SH1) protein is Beta-ketoacyl-[acyl-carrier-protein] synthase III.